Consider the following 227-residue polypeptide: Cytidylate kinase (227 aa).

12-20 (GPSGVGKGT) is an ATP binding site.

This sequence belongs to the cytidylate kinase family. Type 1 subfamily.

The protein resides in the cytoplasm. It carries out the reaction CMP + ATP = CDP + ADP. It catalyses the reaction dCMP + ATP = dCDP + ADP. This is Cytidylate kinase from Shewanella denitrificans (strain OS217 / ATCC BAA-1090 / DSM 15013).